The chain runs to 451 residues: Probable multidrug resistance protein NorM (451 aa).

12 helical membrane-spanning segments follow: residues 23–43 (GPVVVSQFAANALALIATAVI), 53–73 (AAAYANAAYYLVFIMVVGVML), 101–121 (LALLLSAVMLPLMWALSFVLP), 132–152 (LVAAYLRVYSLGMLPNLAFIA), 169–189 (VALTGVVWALLVAPALAFGWG), 194–214 (LGLAGAAGASASAAWIMAALL), 243–263 (WPIGLTLGAEGGMFSVTTLLM), 277–297 (TMQTITAFFMVPLGIASATGV), 316–336 (LVGLGLSSAVMLTFAVIELAA), 355–375 (LIAAATGFLSIAALFQLMDGL), 391–411 (VPLLVSLVAYWVVGLGLGSVL), and 422–442 (LWFGLTAGLTLAGLSLVGRFL).

The protein belongs to the multi antimicrobial extrusion (MATE) (TC 2.A.66.1) family.

It localises to the cell membrane. Functionally, multidrug efflux pump. This is Probable multidrug resistance protein NorM (norM) from Deinococcus radiodurans (strain ATCC 13939 / DSM 20539 / JCM 16871 / CCUG 27074 / LMG 4051 / NBRC 15346 / NCIMB 9279 / VKM B-1422 / R1).